We begin with the raw amino-acid sequence, 4599 residues long: Low-density lipoprotein receptor-related protein 1B (4599 aa).

Positions 1-20 (MSEFLLALLTLSGLLPIARV) are cleaved as a signal peptide. At 25–4444 (ADRDQQLCDP…KSDHISTRSI (4420 aa)) the chain is on the extracellular side. LDL-receptor class A domains are found at residues 31–70 (LCDP…DTCP) and 76–114 (KCPL…VHCQ). 12 disulfides stabilise this stretch: C32/C45, C39/C58, C52/C69, C77/C90, C84/C103, C97/C113, C120/C129, C125/C138, C140/C153, C159/C169, C165/C178, and C180/C193. The EGF-like 1 domain occupies 116-154 (LLSNCQQLNCQYKCTMVRNSTRCYCEDGFEITEDGRSCK). Residue N134 is glycosylated (N-linked (GlcNAc...) asparagine). One can recognise an EGF-like 2; calcium-binding domain in the interval 155 to 194 (DQDECAVYGTCSQTCRNTHGSYTCSCVEGYLMQPDNRSCK). N-linked (GlcNAc...) asparagine glycans are attached at residues N190, N220, N313, and N360. LDL-receptor class B repeat units lie at residues 295-337 (RNLY…DPIA), 338-381 (GKLF…DLVN), and 382-425 (KLVY…FEDY). N-linked (GlcNAc...) asparagine glycosylation is present at N443. Residues 471–517 (RSHACEVDPYGMPGGCSHICLLSSSYKTRTCRCRTGFNLGSDGRSCK) form the EGF-like 3 domain. LDL-receptor class B repeat units follow at residues 568-610 (NYIY…DWIG), 611-656 (NNLY…DPVN), 657-706 (GWMY…DFHT), and 707-750 (NTLY…HGNY). N-linked (GlcNAc...) asparagine glycosylation is found at N725 and N758. One can recognise an EGF-like 4 domain in the interval 794 to 834 (GDNMCRVNNGGCSTLCLAIPGGRVCACADNQLLDENGTTCT). Cystine bridges form between C798–C809, C805–C818, C820–C833, C845–C857, C852–C870, and C864–C881. N829 carries an N-linked (GlcNAc...) asparagine glycan. The LDL-receptor class A 3 domain occupies 844–882 (ICKAGEFRCKNRHCIQARWKCDGDDDCLDGSDEDSVNCF). N883 carries N-linked (GlcNAc...) asparagine glycosylation. 7 consecutive LDL-receptor class A domains span residues 885-923 (SCPD…QTCT), 926-963 (TCQV…ASCE), 966-1003 (TCEP…VGCV), 1005-1043 (SCFD…INCT), 1052-1089 (GCNG…KGCN), 1094-1132 (LCDH…DDCD), and 1135-1174 (LCGP…YLCD). Cystine bridges form between C886-C898, C893-C911, C905-C922, C927-C939, C934-C952, C946-C962, C967-C980, C975-C993, C987-C1002, C1006-C1018, C1013-C1031, C1025-C1042, C1053-C1066, C1060-C1079, and C1073-C1088. N-linked (GlcNAc...) asparagine glycosylation is present at N919. N-linked (GlcNAc...) asparagine glycosylation occurs at N1041. The N-linked (GlcNAc...) asparagine glycan is linked to N1089. 6 disulfides stabilise this stretch: C1095–C1109, C1103–C1122, C1116–C1131, C1136–C1150, C1143–C1163, and C1157–C1173. N1145 is a glycosylation site (N-linked (GlcNAc...) asparagine). EGF-like domains lie at 1174–1213 (DECS…KTCE) and 1214–1253 (IVDY…ESCT). N1209 is a glycosylation site (N-linked (GlcNAc...) asparagine). N1298 is a glycosylation site (N-linked (GlcNAc...) asparagine). 5 LDL-receptor class B repeats span residues 1300 to 1346 (SLLY…DWIA), 1347 to 1389 (GNIY…DPRY), 1390 to 1436 (GILF…DHFE), 1437 to 1480 (KRIV…LYGS), and 1481 to 1522 (EVYW…YHPS). N1502, N1549, and N1636 each carry an N-linked (GlcNAc...) asparagine glycan. An EGF-like 7 domain is found at 1527–1570 (APNPCAANDGKGPCSHMCLINHNRSAACACPHLMKLSSDKKTCY). LDL-receptor class B repeat units follow at residues 1618 to 1660 (ERLY…DWVS), 1661 to 1704 (RNLY…HPVR), 1705 to 1744 (GKLY…DYVE), and 1745 to 1787 (NKLY…TIMD). 2 N-linked (GlcNAc...) asparagine glycosylation sites follow: N1754 and N1816. An EGF-like 8 domain is found at 1834-1875 (GSNSCQLNNGGCSQLCLPTSETTRTCMCTVGYYLQKNRMSCQ). 3 disulfide bridges follow: C1838–C1849, C1845–C1859, and C1861–C1874. Residue N1921 is glycosylated (N-linked (GlcNAc...) asparagine). LDL-receptor class B repeat units lie at residues 1922–1964 (DTIY…DWIA), 1965–2007 (GNIY…HPEK), 2008–2051 (GLLF…DYEE), and 2052–2095 (NKLY…FGAY). N1983 carries an N-linked (GlcNAc...) asparagine glycan. N2105 carries an N-linked (GlcNAc...) asparagine glycan. An EGF-like 9 domain is found at 2143-2183 (GTNVCARDNGGCKQLCLYRGNSRRTCACAHGYLAEDGVTCL). 3 disulfides stabilise this stretch: C2147-C2158, C2154-C2168, and C2170-C2182. 5 LDL-receptor class B repeats span residues 2239–2280 (NRIF…HRAW), 2281–2329 (DTLY…DECQ), 2330–2374 (NLMF…DYRA), 2375–2416 (EKLY…VYDN), and 2417–2459 (YIFW…VAND). 3 N-linked (GlcNAc...) asparagine glycosylation sites follow: N2458, N2488, and N2507. The region spanning 2464 to 2504 (ELSPCALLNGGCHDLCLLTPNGRVNCSCRGDRILLEDNRCV) is the EGF-like 10 domain. The 40-residue stretch at 2509 to 2548 (SCNAYSEFECGNGECIDYQLTCDGIPHCKDKSDEKLLYCE) folds into the LDL-receptor class A 11 domain. 3 cysteine pairs are disulfide-bonded: C2510/C2523, C2518/C2536, and C2530/C2547. Residue N2549 is glycosylated (N-linked (GlcNAc...) asparagine). LDL-receptor class A domains follow at residues 2551-2587 (SCRR…LDCK), 2590-2626 (TCAT…KNCN), 2629-2675 (DCTH…LKCP), 2681-2717 (KCEE…FHCD), 2719-2757 (SCSW…SICG), and 2760-2800 (TCAA…AGCA). 6 disulfides stabilise this stretch: C2552–C2564, C2559–C2577, C2571–C2586, C2591–C2603, C2598–C2616, and C2610–C2625. N-linked (GlcNAc...) asparagine glycans are attached at residues N2626 and N2647. Cystine bridges form between C2630–C2652, C2646–C2665, C2659–C2674, C2682–C2694, C2689–C2707, C2701–C2716, C2720–C2732, C2727–C2745, C2739–C2756, C2761–C2774, C2768–C2787, and C2781–C2799. N2802 is a glycosylation site (N-linked (GlcNAc...) asparagine). LDL-receptor class A domains are found at residues 2804-2841 (TCDE…PQCG), 2844-2885 (QCGT…PKCK), and 2890-2926 (SCNS…RNCH). 15 disulfide bridges follow: C2805–C2817, C2812–C2830, C2824–C2840, C2845–C2857, C2852–C2871, C2865–C2884, C2891–C2903, C2898–C2916, C2910–C2925, C2930–C2942, C2938–C2951, C2953–C2966, C2972–C2982, C2978–C2991, and C2993–C3007. The N-linked (GlcNAc...) asparagine glycan is linked to N2892. One can recognise an EGF-like 11 domain in the interval 2927–2967 (INECLSKKVSGCSQDCQDLPVSYKCKCWPGFQLKDDGKTCV). Residues 2968–3008 (DIDECSSGFPCSQQCINTYGTYKCLCTDGYEIQPDNPNGCK) form the EGF-like 12; calcium-binding domain. Residues N3034, N3066, and N3076 are each glycosylated (N-linked (GlcNAc...) asparagine). LDL-receptor class B repeat units lie at residues 3055–3098 (EFIY…DWIG), 3099–3141 (KNLY…DPQA), 3142–3185 (GYLY…DYVN), 3186–3224 (RRLY…TLFE), and 3225–3268 (DYIY…HSYR). N-linked (GlcNAc...) asparagine glycosylation is present at N3164. The 42-residue stretch at 3273–3314 (SKHLCMINNGGCSHLCLLAPGKTHTCACPTNFYLAADNRTCL) folds into the EGF-like 13 domain. 2 N-linked (GlcNAc...) asparagine glycosylation sites follow: N3310 and N3316. LDL-receptor class A domains follow at residues 3316-3353 (NCTA…DDCP), 3356-3392 (RCQP…LNCD), 3395-3432 (VCLS…RDCP), 3435-3472 (SCSP…ANCD), 3475-3511 (TCGP…ENCK), 3514-3550 (TCTL…RNCE), 3552-3588 (SCSK…KSCE), 3593-3629 (TCSS…MDCV), 3631-3668 (ECKE…ENCE), 3673-3711 (ICRA…DMCV), 3714-3752 (LCPS…DHCG), and 3761-3797 (PCKK…QGCR). Cystine bridges form between C3317/C3329, C3324/C3342, C3336/C3352, C3357/C3369, C3364/C3382, C3376/C3391, C3396/C3409, C3403/C3422, C3416/C3431, C3436/C3449, C3443/C3462, C3456/C3471, C3476/C3488, C3483/C3501, C3495/C3510, C3515/C3527, C3522/C3540, C3534/C3549, C3553/C3565, C3560/C3578, C3572/C3587, C3594/C3606, C3601/C3619, C3613/C3628, C3632/C3645, C3639/C3658, C3652/C3667, C3674/C3686, C3681/C3699, C3693/C3710, C3715/C3729, C3723/C3742, C3736/C3751, C3762/C3774, C3769/C3787, C3781/C3796, C3805/C3818, C3812/C3827, C3829/C3842, C3848/C3858, C3854/C3867, and C3869/C3880. Residue N3682 is glycosylated (N-linked (GlcNAc...) asparagine). 2 EGF-like domains span residues 3801 to 3843 (TEYT…RQCE) and 3844 to 3881 (DLNE…NTCI). N3877, N3894, and N3906 each carry an N-linked (GlcNAc...) asparagine glycan. LDL-receptor class B repeat units lie at residues 3933 to 3980 (DMII…DWVA), 3981 to 4038 (GNIY…NPKR), 4039 to 4082 (GMMY…DYFS), and 4083 to 4127 (ERIY…FEDY). N-linked (GlcNAc...) asparagine glycosylation occurs at N4017. EGF-like domains are found at residues 4171–4208 (DLPN…GTCN), 4213–4249 (LDDS…ERCE), 4249–4285 (EVNH…PNCG), 4285–4321 (GKTV…DRCQ), 4321–4357 (QYYV…PKCE), 4357–4392 (EVDK…SSCQ), and 4390–4427 (SCQL…TQCE). N-linked (GlcNAc...) asparagine glycosylation is present at N4204. Cystine bridges form between C4217/C4227, C4221/C4237, C4253/C4263, C4257/C4273, C4275/C4284, C4289/C4299, C4293/C4309, C4311/C4320, C4325/C4335, C4329/C4345, and C4347/C4356. N4381 is a glycosylation site (N-linked (GlcNAc...) asparagine). 3 disulfide bridges follow: C4394/C4404, C4398/C4415, and C4417/C4426. N4420 carries N-linked (GlcNAc...) asparagine glycosylation. The helical transmembrane segment at 4445–4467 (AIIVPLVLLVTLITTLVIGLVLC) threads the bilayer. Over 4468-4599 (KRKRRTKTIR…IEIGIRETVA (132 aa)) the chain is Cytoplasmic. 2 consecutive short sequence motifs (endocytosis signal) follow at residues 4492 to 4495 (NPSY) and 4559 to 4562 (NPVY).

Belongs to the LDLR family. In terms of assembly, binds LRPAP1, PLAU, PLAT and SERPINE1; binding is followed by internalization and degradation of the ligands. As to expression, expressed in thyroid gland and in salivary gland, as well as in adult and fetal brain.

It is found in the membrane. Potential cell surface proteins that bind and internalize ligands in the process of receptor-mediated endocytosis. In Homo sapiens (Human), this protein is Low-density lipoprotein receptor-related protein 1B (LRP1B).